Consider the following 122-residue polypeptide: Large ribosomal subunit protein uL14c (122 aa).

Belongs to the universal ribosomal protein uL14 family. As to quaternary structure, part of the 50S ribosomal subunit.

Its subcellular location is the plastid. The protein localises to the chloroplast. Its function is as follows. Binds to 23S rRNA. The polypeptide is Large ribosomal subunit protein uL14c (Nicotiana sylvestris (Wood tobacco)).